A 202-amino-acid polypeptide reads, in one-letter code: Inner membrane-spanning protein YciB (202 aa).

6 consecutive transmembrane segments (helical) span residues 3 to 23 (ILFDLLPVILFFVAYKIAGGN), 46 to 66 (ILLATAVAILATIAQIGWVWM), 73 to 93 (TMLWISLAIIAVFGGATLFFH), 100 to 120 (WKPTALYWLFGGTLTVSAVIF), 145 to 165 (LAWAGFFILMGFLNLYVAYNF), and 173 to 193 (FKLFGGMGLMLLFVLGQGFYL).

This sequence belongs to the YciB family.

The protein localises to the cell inner membrane. Its function is as follows. Plays a role in cell envelope biogenesis, maintenance of cell envelope integrity and membrane homeostasis. The chain is Inner membrane-spanning protein YciB from Aromatoleum aromaticum (strain DSM 19018 / LMG 30748 / EbN1) (Azoarcus sp. (strain EbN1)).